Here is a 414-residue protein sequence, read N- to C-terminus: Wilms tumor protein homolog A (414 aa).

Residues K55 and K158 each participate in a glycyl lysine isopeptide (Lys-Gly) (interchain with G-Cter in SUMO) cross-link. Residues 217–225 (MTWNQMNLG) carry the 9aaTAD motif. C2H2-type zinc fingers lie at residues 288–312 (FMCA…SRKH), 318–342 (YQCD…QRRH), and 348–370 (FQCK…TRTH). 2 important for interaction with target DNA regions span residues 332 to 346 (SDQL…TGIK) and 358 to 366 (SRSDHLKTH). A KTS motif motif is present at residues 373–375 (KTS). The C2H2-type 4 zinc-finger motif lies at 379–403 (FSCRWPSCQKKFARSDELVRHHNMH).

This sequence belongs to the EGR C2H2-type zinc-finger protein family. In terms of tissue distribution, expressed around the pronephric anlage and in the pronephros; expression is restricted to the splanchnic mesoderm (the site where the glomus forms) from tailbud stages, and the glomus of early tadpoles. Not expressed in the pronephric tubules or pronephric duct. In tadpoles (stage 38-39), additional expression begins in the heart. Also expressed in the adult kidney (mesonephros).

The protein resides in the nucleus. The protein localises to the cytoplasm. It is found in the nucleus speckle. Functionally, transcription factor required for development of the vascular component of the pronephric kidney, the glomus; may repress tubule-specific gene expression in the portion of the pronephros fated to form the glomus. Recognizes and binds to the DNA sequence 5'-GCG(T/G)GGGCG-3'. Inhibits Wnt-signaling during embryonic development. Function may be isoform-specific: the isoform containing the KTS motif is less effective in inhibiting wnt signaling. The sequence is that of Wilms tumor protein homolog A (wt1-a) from Xenopus laevis (African clawed frog).